Here is a 315-residue protein sequence, read N- to C-terminus: 4-hydroxy-3-methylbut-2-enyl diphosphate reductase (315 aa).

[4Fe-4S] cluster is bound at residue Cys12. The (2E)-4-hydroxy-3-methylbut-2-enyl diphosphate site is built by His40 and His74. The dimethylallyl diphosphate site is built by His40 and His74. 2 residues coordinate isopentenyl diphosphate: His40 and His74. Cys96 provides a ligand contact to [4Fe-4S] cluster. A (2E)-4-hydroxy-3-methylbut-2-enyl diphosphate-binding site is contributed by His124. His124 is a binding site for dimethylallyl diphosphate. His124 contacts isopentenyl diphosphate. Glu126 functions as the Proton donor in the catalytic mechanism. Thr167 is a (2E)-4-hydroxy-3-methylbut-2-enyl diphosphate binding site. Cys213 is a binding site for [4Fe-4S] cluster. 4 residues coordinate (2E)-4-hydroxy-3-methylbut-2-enyl diphosphate: Ser241, Ser242, Asn243, and Ser290. The dimethylallyl diphosphate site is built by Ser241, Ser242, Asn243, and Ser290. Residues Ser241, Ser242, Asn243, and Ser290 each contribute to the isopentenyl diphosphate site.

It belongs to the IspH family. It depends on [4Fe-4S] cluster as a cofactor.

The catalysed reaction is isopentenyl diphosphate + 2 oxidized [2Fe-2S]-[ferredoxin] + H2O = (2E)-4-hydroxy-3-methylbut-2-enyl diphosphate + 2 reduced [2Fe-2S]-[ferredoxin] + 2 H(+). It catalyses the reaction dimethylallyl diphosphate + 2 oxidized [2Fe-2S]-[ferredoxin] + H2O = (2E)-4-hydroxy-3-methylbut-2-enyl diphosphate + 2 reduced [2Fe-2S]-[ferredoxin] + 2 H(+). It functions in the pathway isoprenoid biosynthesis; dimethylallyl diphosphate biosynthesis; dimethylallyl diphosphate from (2E)-4-hydroxy-3-methylbutenyl diphosphate: step 1/1. The protein operates within isoprenoid biosynthesis; isopentenyl diphosphate biosynthesis via DXP pathway; isopentenyl diphosphate from 1-deoxy-D-xylulose 5-phosphate: step 6/6. Catalyzes the conversion of 1-hydroxy-2-methyl-2-(E)-butenyl 4-diphosphate (HMBPP) into a mixture of isopentenyl diphosphate (IPP) and dimethylallyl diphosphate (DMAPP). Acts in the terminal step of the DOXP/MEP pathway for isoprenoid precursor biosynthesis. This chain is 4-hydroxy-3-methylbut-2-enyl diphosphate reductase, found in Chloroherpeton thalassium (strain ATCC 35110 / GB-78).